The following is a 590-amino-acid chain: Multidrug and toxin extrusion protein 1 (590 aa).

Residues 1–59 lie on the Cytoplasmic side of the membrane; the sequence is MDSITSYNVTQMNGDTKQEKCDDVLSTSSTQKFCGGCRKKLRSLLPVNYKTEIVELLKL. The helical transmembrane segment at 60–80 threads the bilayer; that stretch reads AGPVFISQLMIFLISFVSTVF. Residues 81–88 are Extracellular-facing; that stretch reads CGHLGKTE. The chain crosses the membrane as a helical span at residues 89-109; that stretch reads LAGVALAIAVINVTGISIGSG. Over 110–137 the chain is Cytoplasmic; the sequence is LASACDTLISQTFGSNNLKRVGVILQRG. The helical transmembrane segment at 138-158 threads the bilayer; it reads ILILLLACFPCWALLINTEPI. Residues 159-167 are Extracellular-facing; that stretch reads LLAVRQSPN. The helical transmembrane segment at 168-188 threads the bilayer; sequence VASLSQLYVKIFMPALPAAFM. Topologically, residues 189–199 are cytoplasmic; sequence YQLQGRYLQNQ. The chain crosses the membrane as a helical span at residues 200–222; it reads GIIWPQVITGAAGNILNALINYV. At 223-231 the chain is on the extracellular side; it reads FLHLLELGV. A helical membrane pass occupies residues 232 to 254; that stretch reads AGSAAANTISQYSLAVFLYVYIR. Over 255–274 the chain is Cytoplasmic; the sequence is WKNLHKATWDGWSRDCLQEW. A helical membrane pass occupies residues 275–294; sequence GAFIRLALPSMLMLCVEWWT. Residues 295–313 lie on the Extracellular side of the membrane; that stretch reads YEIGGFLAGLISETELGAQ. Residues 314 to 334 traverse the membrane as a helical segment; sequence SVVYELATIAYMFPLGFAVAA. Topologically, residues 335–351 are cytoplasmic; that stretch reads SVRVGNALGAGNTERAK. The chain crosses the membrane as a helical span at residues 352–372; it reads LSAKVALVCGVLVSCVVATLI. Residues 373–395 lie on the Extracellular side of the membrane; sequence GCTKDVIAYIFTTEEEIVSRVSQ. Residues 396–416 traverse the membrane as a helical segment; the sequence is VMIMYGFFHLFDAIAGITGGI. The Cytoplasmic segment spans residues 417–430; that stretch reads VRGAGKQLLGALCN. Residues 431–451 traverse the membrane as a helical segment; the sequence is IVGYYFVGFPTGVSLMFALSM. Position 452 (glycine 452) is a topological domain, extracellular. The helical transmembrane segment at 453 to 473 threads the bilayer; the sequence is IIGLWIGFFGCVFLQSLFFII. The Cytoplasmic segment spans residues 474–565; sequence LIYKLDWKKA…TTKQLIVRRG (92 aa). The chain crosses the membrane as a helical span at residues 566-586; sequence LAVLLMVLILAGGIVLNEMLV. Over 587–590 the chain is Extracellular; that stretch reads RYLR.

This sequence belongs to the multi antimicrobial extrusion (MATE) (TC 2.A.66.1) family.

Its subcellular location is the cell membrane. Solute transporter for tetraethylammonium (TEA), cimetidine, metformin, guanidine, N-methylnicotinamide (NMN) and also the zwitterionic cephalosporin cephalexin. Responsible for the secretion of cationic drugs across the brush border membranes. The protein is Multidrug and toxin extrusion protein 1 (slc47a1) of Danio rerio (Zebrafish).